A 232-amino-acid chain; its full sequence is Ubiquinone biosynthesis O-methyltransferase (232 aa).

4 residues coordinate S-adenosyl-L-methionine: arginine 36, glycine 55, aspartate 76, and leucine 120.

It belongs to the methyltransferase superfamily. UbiG/COQ3 family.

It catalyses the reaction a 3-demethylubiquinol + S-adenosyl-L-methionine = a ubiquinol + S-adenosyl-L-homocysteine + H(+). The catalysed reaction is a 3-(all-trans-polyprenyl)benzene-1,2-diol + S-adenosyl-L-methionine = a 2-methoxy-6-(all-trans-polyprenyl)phenol + S-adenosyl-L-homocysteine + H(+). It functions in the pathway cofactor biosynthesis; ubiquinone biosynthesis. O-methyltransferase that catalyzes the 2 O-methylation steps in the ubiquinone biosynthetic pathway. This Pseudomonas fluorescens (strain ATCC BAA-477 / NRRL B-23932 / Pf-5) protein is Ubiquinone biosynthesis O-methyltransferase.